Here is a 259-residue protein sequence, read N- to C-terminus: Type III pantothenate kinase (259 aa).

Position 6–13 (6–13 (DIGNTNVV)) interacts with ATP. 107–110 (GADR) serves as a coordination point for substrate. D109 acts as the Proton acceptor in catalysis. D129 provides a ligand contact to K(+). T132 lines the ATP pocket. Residue T184 participates in substrate binding.

It belongs to the type III pantothenate kinase family. As to quaternary structure, homodimer. The cofactor is NH4(+). K(+) is required as a cofactor.

It is found in the cytoplasm. It catalyses the reaction (R)-pantothenate + ATP = (R)-4'-phosphopantothenate + ADP + H(+). Its pathway is cofactor biosynthesis; coenzyme A biosynthesis; CoA from (R)-pantothenate: step 1/5. Its function is as follows. Catalyzes the phosphorylation of pantothenate (Pan), the first step in CoA biosynthesis. The polypeptide is Type III pantothenate kinase (Thermomicrobium roseum (strain ATCC 27502 / DSM 5159 / P-2)).